The sequence spans 301 residues: tRNA-cytidine(32) 2-sulfurtransferase (301 aa).

Residues 55–60 (SGGKDS) carry the PP-loop motif motif. [4Fe-4S] cluster-binding residues include C130, C133, and C221.

This sequence belongs to the TtcA family. Homodimer. Mg(2+) is required as a cofactor. It depends on [4Fe-4S] cluster as a cofactor.

The protein localises to the cytoplasm. It carries out the reaction cytidine(32) in tRNA + S-sulfanyl-L-cysteinyl-[cysteine desulfurase] + AH2 + ATP = 2-thiocytidine(32) in tRNA + L-cysteinyl-[cysteine desulfurase] + A + AMP + diphosphate + H(+). It participates in tRNA modification. Its function is as follows. Catalyzes the ATP-dependent 2-thiolation of cytidine in position 32 of tRNA, to form 2-thiocytidine (s(2)C32). The sulfur atoms are provided by the cysteine/cysteine desulfurase (IscS) system. This is tRNA-cytidine(32) 2-sulfurtransferase from Acinetobacter baumannii (strain SDF).